The sequence spans 342 residues: UDP-N-acetylglucosamine transporter YEA4 (342 aa).

The Cytoplasmic portion of the chain corresponds to 1-6; that stretch reads MWNSLK. A helical transmembrane segment spans residues 7–27; the sequence is AFALVFGGCCSNVITFETLMS. Residues 28 to 35 lie on the Lumenal side of the membrane; sequence NETGSINN. Residues 36-56 form a helical membrane-spanning segment; it reads LITFCQFLFVTCQGLPEFLDV. Residues 57 to 61 lie on the Cytoplasmic side of the membrane; that stretch reads HQPFP. A helical membrane pass occupies residues 62–82; the sequence is YFKPLKTPLHVYVITVVLFYI. Topologically, residues 83 to 96 are lumenal; that stretch reads SSTTNNNVFKYNIS. A helical transmembrane segment spans residues 97-117; the sequence is IPIHIVFRCFGTVITMFTCWL. Topologically, residues 118–123 are cytoplasmic; that stretch reads LNGRKY. A helical transmembrane segment spans residues 124–144; the sequence is TKIQILSTLFLTIGAIIASLF. The Lumenal portion of the chain corresponds to 145 to 168; it reads KDADFRYQDLKLQAWKIGSDQSVD. A helical membrane pass occupies residues 169–189; sequence LTFIFGICILVLSSFTSSLLS. Residues 190–253 lie on the Cytoplasmic side of the membrane; it reads AYNERTYQKY…GGKILVPREE (64 aa). Residues 254–274 traverse the membrane as a helical segment; it reads TLLLFNVLTQYFCVKGVNILA. The Lumenal portion of the chain corresponds to 275–307; it reads SKTNALTLSITLLVRKFISLLLSVRLFDNNLSY. Residues 308-328 form a helical membrane-spanning segment; sequence TGYIGVYLVFFGAFIYSLGSI. The Cytoplasmic portion of the chain corresponds to 329–342; sequence HPRQNDKGAIKKSK.

Belongs to the nucleotide-sugar transporter family. SLC35B subfamily.

It is found in the endoplasmic reticulum. The protein localises to the endoplasmic reticulum membrane. Sugar transporter that specifically mediates the transport of UDP-N-acetylglucosamine (UDP-GlcNAc) and is required for cell wall chitin synthesis. This is UDP-N-acetylglucosamine transporter YEA4 (YEA4) from Saccharomyces cerevisiae (strain ATCC 204508 / S288c) (Baker's yeast).